The sequence spans 268 residues: uncharacterized protein (268 aa).

This is an uncharacterized protein from Haemophilus influenzae (strain ATCC 51907 / DSM 11121 / KW20 / Rd).